Consider the following 523-residue polypeptide: Peptide chain release factor 3 (523 aa).

The tr-type G domain maps to 10–277 (NKRRTFAIIS…QFVDLAPAPG (268 aa)). Residues 19–26 (SHPDAGKT), 87–91 (DTPGH), and 141–144 (NKLD) contribute to the GTP site.

Belongs to the TRAFAC class translation factor GTPase superfamily. Classic translation factor GTPase family. PrfC subfamily.

The protein resides in the cytoplasm. Functionally, increases the formation of ribosomal termination complexes and stimulates activities of RF-1 and RF-2. It binds guanine nucleotides and has strong preference for UGA stop codons. It may interact directly with the ribosome. The stimulation of RF-1 and RF-2 is significantly reduced by GTP and GDP, but not by GMP. The chain is Peptide chain release factor 3 from Lactobacillus delbrueckii subsp. bulgaricus (strain ATCC BAA-365 / Lb-18).